The following is a 259-amino-acid chain: 12alpha-hydroxysteroid dehydrogenase (259 aa).

The active-site Proton acceptor is Tyr-162.

This sequence belongs to the short-chain dehydrogenases/reductases (SDR) family. As to quaternary structure, homotetramer.

It catalyses the reaction cholate + NADP(+) = 3alpha,7alpha-dihydroxy-12-oxo-5beta-cholanate + NADPH + H(+). The catalysed reaction is deoxycholate + NADP(+) = 12-dehydrodeoxycholate + NADPH + H(+). Its function is as follows. Catalyzes the oxidation of the 12alpha-hydroxy group of bile acids, like cholate and deoxycholate. Is also able to catalyze the reverse reaction in vitro. Is likely involved in an epimerization pathway of bile acids that converts hydroxy groups from alpha to beta positions via stable oxo-intermediates, which occurs in the human gut. In Clostridium sp. (strain ATCC 29733 / VPI C48-50), this protein is 12alpha-hydroxysteroid dehydrogenase.